Consider the following 170-residue polypeptide: ATP synthase subunit b (170 aa).

Residues 20–42 (QLLAMLVLLALLKKFALGPLLNI) form a helical membrane-spanning segment.

The protein belongs to the ATPase B chain family. F-type ATPases have 2 components, F(1) - the catalytic core - and F(0) - the membrane proton channel. F(1) has five subunits: alpha(3), beta(3), gamma(1), delta(1), epsilon(1). F(0) has three main subunits: a(1), b(2) and c(10-14). The alpha and beta chains form an alternating ring which encloses part of the gamma chain. F(1) is attached to F(0) by a central stalk formed by the gamma and epsilon chains, while a peripheral stalk is formed by the delta and b chains.

It localises to the cell membrane. Its function is as follows. F(1)F(0) ATP synthase produces ATP from ADP in the presence of a proton or sodium gradient. F-type ATPases consist of two structural domains, F(1) containing the extramembraneous catalytic core and F(0) containing the membrane proton channel, linked together by a central stalk and a peripheral stalk. During catalysis, ATP synthesis in the catalytic domain of F(1) is coupled via a rotary mechanism of the central stalk subunits to proton translocation. Component of the F(0) channel, it forms part of the peripheral stalk, linking F(1) to F(0). This is ATP synthase subunit b from Bacillus velezensis (strain DSM 23117 / BGSC 10A6 / LMG 26770 / FZB42) (Bacillus amyloliquefaciens subsp. plantarum).